The primary structure comprises 37 residues: Large ribosomal subunit protein bL36 (37 aa).

This sequence belongs to the bacterial ribosomal protein bL36 family.

This is Large ribosomal subunit protein bL36 from Dictyoglomus thermophilum (strain ATCC 35947 / DSM 3960 / H-6-12).